Here is a 288-residue protein sequence, read N- to C-terminus: Quinate/shikimate dehydrogenase (288 aa).

Substrate contacts are provided by Lys-71 and Asp-107. NAD(+)-binding positions include 132 to 135 (AGGA), 155 to 158 (NRRD), Lys-205, 232 to 235 (CVYN), and Gly-255.

It belongs to the shikimate dehydrogenase family. As to quaternary structure, homodimer.

The enzyme catalyses L-quinate + NAD(+) = 3-dehydroquinate + NADH + H(+). It catalyses the reaction L-quinate + NADP(+) = 3-dehydroquinate + NADPH + H(+). The catalysed reaction is shikimate + NADP(+) = 3-dehydroshikimate + NADPH + H(+). It carries out the reaction shikimate + NAD(+) = 3-dehydroshikimate + NADH + H(+). Its pathway is metabolic intermediate biosynthesis; chorismate biosynthesis; chorismate from D-erythrose 4-phosphate and phosphoenolpyruvate: step 4/7. Functionally, the actual biological function of YdiB remains unclear, nor is it known whether 3-dehydroshikimate or quinate represents the natural substrate. Catalyzes the reversible NAD-dependent reduction of both 3-dehydroshikimate (DHSA) and 3-dehydroquinate to yield shikimate (SA) and quinate, respectively. It can use both NAD or NADP for catalysis, however it has higher catalytic efficiency with NAD. The chain is Quinate/shikimate dehydrogenase from Escherichia coli O81 (strain ED1a).